Here is a 222-residue protein sequence, read N- to C-terminus: Iron-sulfur cluster repair protein YtfE (222 aa).

This sequence belongs to the RIC family. YtfE subfamily. Homodimer.

Its subcellular location is the cytoplasm. Functionally, di-iron-containing protein involved in the repair of iron-sulfur clusters damaged by oxidative and nitrosative stress conditions. This Musicola paradisiaca (strain Ech703) (Dickeya paradisiaca) protein is Iron-sulfur cluster repair protein YtfE.